Consider the following 331-residue polypeptide: Ribose-phosphate pyrophosphokinase (331 aa).

Residue 55 to 57 coordinates ATP; the sequence is DGE. 2 residues coordinate Mg(2+): His148 and Asp187. The active site involves Lys211. Residues Arg213, Asp237, and 241–245 contribute to the D-ribose 5-phosphate site; that span reads DTGGT.

This sequence belongs to the ribose-phosphate pyrophosphokinase family. Class I subfamily. Homohexamer. Mg(2+) is required as a cofactor.

The protein localises to the cytoplasm. It catalyses the reaction D-ribose 5-phosphate + ATP = 5-phospho-alpha-D-ribose 1-diphosphate + AMP + H(+). It functions in the pathway metabolic intermediate biosynthesis; 5-phospho-alpha-D-ribose 1-diphosphate biosynthesis; 5-phospho-alpha-D-ribose 1-diphosphate from D-ribose 5-phosphate (route I): step 1/1. Functionally, involved in the biosynthesis of the central metabolite phospho-alpha-D-ribosyl-1-pyrophosphate (PRPP) via the transfer of pyrophosphoryl group from ATP to 1-hydroxyl of ribose-5-phosphate (Rib-5-P). The sequence is that of Ribose-phosphate pyrophosphokinase from Prochlorococcus marinus subsp. pastoris (strain CCMP1986 / NIES-2087 / MED4).